Reading from the N-terminus, the 256-residue chain is L-erythrulose-1-phosphate isomerase (256 aa).

His-96 (electrophile) is an active-site residue. Residue Glu-169 is the Proton acceptor of the active site. The substrate site is built by Gly-175 and Ser-212.

This sequence belongs to the triosephosphate isomerase family. As to quaternary structure, homodimer.

The protein localises to the cytoplasm. The catalysed reaction is L-erythrulose 1-phosphate = D-erythrulose 4-phosphate. It functions in the pathway carbohydrate metabolism; erythritol degradation. Its function is as follows. Catalyzes the isomerization of D-erythrulose-4P to L-erythrulose-1P. This Brucella melitensis biotype 1 (strain ATCC 23456 / CCUG 17765 / NCTC 10094 / 16M) protein is L-erythrulose-1-phosphate isomerase.